The following is a 152-amino-acid chain: Deoxyuridine 5'-triphosphate nucleotidohydrolase (152 aa).

Residues 72–74, Asn-85, and 89–91 contribute to the substrate site; these read RSG and TID.

It belongs to the dUTPase family. The cofactor is Mg(2+).

The catalysed reaction is dUTP + H2O = dUMP + diphosphate + H(+). It participates in pyrimidine metabolism; dUMP biosynthesis; dUMP from dCTP (dUTP route): step 2/2. Functionally, this enzyme is involved in nucleotide metabolism: it produces dUMP, the immediate precursor of thymidine nucleotides and it decreases the intracellular concentration of dUTP so that uracil cannot be incorporated into DNA. In Rhodopseudomonas palustris (strain HaA2), this protein is Deoxyuridine 5'-triphosphate nucleotidohydrolase.